The primary structure comprises 64 residues: MSKLGVLLTICLLLFPLTALPLDGDQPADQRAERTQAEKHSLPDPRMGCCPFPCKTSCTTLCCG.

A signal peptide spans 1-19; that stretch reads MSKLGVLLTICLLLFPLTA. Positions 20–46 are excised as a propeptide; sequence LPLDGDQPADQRAERTQAEKHSLPDPR. Intrachain disulfides connect C49–C58, C50–C62, and C54–C63. Residue C63 is modified to Cysteine amide.

Belongs to the conotoxin M superfamily. As to expression, expressed by the venom duct.

The protein localises to the secreted. The polypeptide is Conotoxin Mr3.5 (Conus marmoreus (Marble cone)).